A 318-amino-acid polypeptide reads, in one-letter code: Olfactory receptor 51E1 (318 aa).

The Extracellular portion of the chain corresponds to 1-31 (MMVDPNGNESSATYFILIGLPGLEEAQFWLA). Residue Asn-8 is glycosylated (N-linked (GlcNAc...) asparagine). A helical membrane pass occupies residues 32–52 (FPLCSLYLIAVLGNLTIIYIV). Residues 53-60 (RTEHSLHE) lie on the Cytoplasmic side of the membrane. A helical membrane pass occupies residues 61 to 81 (PMYIFLCMLSGIDILISTSSM). Residues 82 to 100 (PKMLAIFWFNSTTIQFDAC) are Extracellular-facing. N-linked (GlcNAc...) asparagine glycosylation is present at Asn-91. Cys-100 and Cys-182 are disulfide-bonded. A helical membrane pass occupies residues 101–123 (LLQMFAIHSLSGMESTVLLAMAF). Residues 124–145 (DRYVAICHPLRHATVLTLPRVT) lie on the Cytoplasmic side of the membrane. Residues 146 to 166 (KIGVAAVVRGAALMAPLPVFI) traverse the membrane as a helical segment. At 167–198 (KQLPFCRSNILSHSYCLHQDVMKLACDDIRVN) the chain is on the extracellular side. A helical membrane pass occupies residues 199 to 219 (VVYGLIVIISAIGLDSLLISF). At 220 to 239 (SYLLILKTVLGLTREAQAKA) the chain is on the cytoplasmic side. Residues 240-260 (FGTCVSHVCAVFIFYVPFIGL) form a helical membrane-spanning segment. Residues 261-275 (SMVHRFSKRRDSPLP) lie on the Extracellular side of the membrane. Residues 276–296 (VILANIYLLVPPVLNPIVYGV) form a helical membrane-spanning segment. Topologically, residues 297-318 (KTKEIRQRILRLFHVATHASEP) are cytoplasmic.

The protein belongs to the G-protein coupled receptor 1 family. Highly expressed in prostate. Very low levels may be detected in some other tissues, such as placenta, skeletal muscle, heart, ovary and testis. Up-regulated in prostate cancers.

Its subcellular location is the cell membrane. Functionally, odorant receptor. This chain is Olfactory receptor 51E1 (OR51E1), found in Homo sapiens (Human).